Consider the following 433-residue polypeptide: tRNA(Ile)-lysidine synthase (433 aa).

37 to 42 (SGGKDS) contributes to the ATP binding site.

It belongs to the tRNA(Ile)-lysidine synthase family.

The protein resides in the cytoplasm. The catalysed reaction is cytidine(34) in tRNA(Ile2) + L-lysine + ATP = lysidine(34) in tRNA(Ile2) + AMP + diphosphate + H(+). Ligates lysine onto the cytidine present at position 34 of the AUA codon-specific tRNA(Ile) that contains the anticodon CAU, in an ATP-dependent manner. Cytidine is converted to lysidine, thus changing the amino acid specificity of the tRNA from methionine to isoleucine. The polypeptide is tRNA(Ile)-lysidine synthase (Leptospira interrogans serogroup Icterohaemorrhagiae serovar copenhageni (strain Fiocruz L1-130)).